The following is a 313-amino-acid chain: Acetyl-coenzyme A carboxylase carboxyl transferase subunit beta, chloroplastic (313 aa).

The region spanning Leu-47–Ser-313 is the CoA carboxyltransferase N-terminal domain. 4 residues coordinate Zn(2+): Cys-51, Cys-54, Cys-70, and Cys-73. The segment at Cys-51–Cys-73 adopts a C4-type zinc-finger fold.

The protein belongs to the AccD/PCCB family. As to quaternary structure, acetyl-CoA carboxylase is a heterohexamer composed of biotin carboxyl carrier protein, biotin carboxylase and 2 subunits each of ACCase subunit alpha and ACCase plastid-coded subunit beta (accD). Requires Zn(2+) as cofactor.

The protein localises to the plastid. It is found in the chloroplast stroma. The enzyme catalyses N(6)-carboxybiotinyl-L-lysyl-[protein] + acetyl-CoA = N(6)-biotinyl-L-lysyl-[protein] + malonyl-CoA. It functions in the pathway lipid metabolism; malonyl-CoA biosynthesis; malonyl-CoA from acetyl-CoA: step 1/1. Component of the acetyl coenzyme A carboxylase (ACC) complex. Biotin carboxylase (BC) catalyzes the carboxylation of biotin on its carrier protein (BCCP) and then the CO(2) group is transferred by the transcarboxylase to acetyl-CoA to form malonyl-CoA. The protein is Acetyl-coenzyme A carboxylase carboxyl transferase subunit beta, chloroplastic of Anthoceros angustus (Hornwort).